We begin with the raw amino-acid sequence, 190 residues long: Xanthine phosphoribosyltransferase (190 aa).

Xanthine-binding residues include Leu20 and Asn27. 128 to 132 serves as a coordination point for 5-phospho-alpha-D-ribose 1-diphosphate; the sequence is ANGHA. Residue Lys156 participates in xanthine binding.

Belongs to the purine/pyrimidine phosphoribosyltransferase family. Xpt subfamily. As to quaternary structure, homodimer.

Its subcellular location is the cytoplasm. It carries out the reaction XMP + diphosphate = xanthine + 5-phospho-alpha-D-ribose 1-diphosphate. It participates in purine metabolism; XMP biosynthesis via salvage pathway; XMP from xanthine: step 1/1. In terms of biological role, converts the preformed base xanthine, a product of nucleic acid breakdown, to xanthosine 5'-monophosphate (XMP), so it can be reused for RNA or DNA synthesis. The protein is Xanthine phosphoribosyltransferase of Pseudomonas paraeruginosa (strain DSM 24068 / PA7) (Pseudomonas aeruginosa (strain PA7)).